A 226-amino-acid chain; its full sequence is Probable transcriptional regulator RABBIT EARS (226 aa).

The C2H2-type zinc-finger motif lies at 55-77 (YSCSFCGREFKSAQALGGHMNVH). The interval 80–102 (DRARLKQQSLSPSSTDQATPPEC) is disordered. Polar residues predominate over residues 85–97 (KQQSLSPSSTDQA). The EAR-like (transcriptional repression) motif lies at 212 to 216 (LDLEL).

Strongly expressed in inflorescences and flowers, and weakly in siliques, seedlings and roots. In flowers, it is expressed in petal primordia and their precursor cells. Also expressed in the lateral root caps and the basal cells of lateral roots.

Its subcellular location is the nucleus. Functionally, probable transcriptional regulator essential for petal development. Required for the early development of the organ primordia of the second whorl. Acts downstream of AP1 and PTL. This chain is Probable transcriptional regulator RABBIT EARS (RBE), found in Arabidopsis thaliana (Mouse-ear cress).